The chain runs to 95 residues: Aspartyl/glutamyl-tRNA(Asn/Gln) amidotransferase subunit C (95 aa).

Belongs to the GatC family. As to quaternary structure, heterotrimer of A, B and C subunits.

The enzyme catalyses L-glutamyl-tRNA(Gln) + L-glutamine + ATP + H2O = L-glutaminyl-tRNA(Gln) + L-glutamate + ADP + phosphate + H(+). It carries out the reaction L-aspartyl-tRNA(Asn) + L-glutamine + ATP + H2O = L-asparaginyl-tRNA(Asn) + L-glutamate + ADP + phosphate + 2 H(+). Allows the formation of correctly charged Asn-tRNA(Asn) or Gln-tRNA(Gln) through the transamidation of misacylated Asp-tRNA(Asn) or Glu-tRNA(Gln) in organisms which lack either or both of asparaginyl-tRNA or glutaminyl-tRNA synthetases. The reaction takes place in the presence of glutamine and ATP through an activated phospho-Asp-tRNA(Asn) or phospho-Glu-tRNA(Gln). The sequence is that of Aspartyl/glutamyl-tRNA(Asn/Gln) amidotransferase subunit C from Gluconacetobacter diazotrophicus (strain ATCC 49037 / DSM 5601 / CCUG 37298 / CIP 103539 / LMG 7603 / PAl5).